The primary structure comprises 661 residues: Transketolase (661 aa).

Substrate is bound at residue His-30. Residues His-70 and 118 to 120 (GPL) contribute to the thiamine diphosphate site. The interval 99–118 (STTPGHPEFRDTPGVEATTG) is disordered. Residue Asp-159 participates in Mg(2+) binding. Residues Gly-160 and Asn-189 each coordinate thiamine diphosphate. The Mg(2+) site is built by Asn-189 and Val-191. Substrate contacts are provided by His-266, Arg-357, and Ser-384. Residue His-266 participates in thiamine diphosphate binding. Glu-411 serves as the catalytic Proton donor. Phe-437 serves as a coordination point for thiamine diphosphate. Residues His-461, Asp-469, and Arg-520 each coordinate substrate.

The protein belongs to the transketolase family. In terms of assembly, homodimer. Mg(2+) serves as cofactor. Requires Ca(2+) as cofactor. The cofactor is Mn(2+). It depends on Co(2+) as a cofactor. Thiamine diphosphate is required as a cofactor.

It catalyses the reaction D-sedoheptulose 7-phosphate + D-glyceraldehyde 3-phosphate = aldehydo-D-ribose 5-phosphate + D-xylulose 5-phosphate. Functionally, catalyzes the transfer of a two-carbon ketol group from a ketose donor to an aldose acceptor, via a covalent intermediate with the cofactor thiamine pyrophosphate. This Physarum polycephalum (Slime mold) protein is Transketolase (tkt).